The sequence spans 366 residues: Quinolinate synthase (366 aa).

Residues His-44 and Ser-61 each contribute to the iminosuccinate site. Cys-108 serves as a coordination point for [4Fe-4S] cluster. Iminosuccinate is bound by residues 139–141 (YIN) and Ser-160. A [4Fe-4S] cluster-binding site is contributed by Cys-228. Iminosuccinate-binding positions include 254 to 256 (HPE) and Thr-271. [4Fe-4S] cluster is bound at residue Cys-318.

The protein belongs to the quinolinate synthase family. Type 3 subfamily. [4Fe-4S] cluster serves as cofactor.

It is found in the cytoplasm. It catalyses the reaction iminosuccinate + dihydroxyacetone phosphate = quinolinate + phosphate + 2 H2O + H(+). The protein operates within cofactor biosynthesis; NAD(+) biosynthesis; quinolinate from iminoaspartate: step 1/1. In terms of biological role, catalyzes the condensation of iminoaspartate with dihydroxyacetone phosphate to form quinolinate. The polypeptide is Quinolinate synthase (Listeria monocytogenes serovar 1/2a (strain ATCC BAA-679 / EGD-e)).